The primary structure comprises 301 residues: Porphobilinogen deaminase (301 aa).

S-(dipyrrolylmethanemethyl)cysteine is present on Cys235.

The protein belongs to the HMBS family. Monomer. Requires dipyrromethane as cofactor.

The catalysed reaction is 4 porphobilinogen + H2O = hydroxymethylbilane + 4 NH4(+). It functions in the pathway porphyrin-containing compound metabolism; protoporphyrin-IX biosynthesis; coproporphyrinogen-III from 5-aminolevulinate: step 2/4. Tetrapolymerization of the monopyrrole PBG into the hydroxymethylbilane pre-uroporphyrinogen in several discrete steps. This is Porphobilinogen deaminase from Thermus thermophilus (strain ATCC BAA-163 / DSM 7039 / HB27).